The following is a 311-amino-acid chain: Porphobilinogen deaminase (311 aa).

S-(dipyrrolylmethanemethyl)cysteine is present on Cys-242.

This sequence belongs to the HMBS family. As to quaternary structure, monomer. Dipyrromethane serves as cofactor.

The enzyme catalyses 4 porphobilinogen + H2O = hydroxymethylbilane + 4 NH4(+). Its pathway is porphyrin-containing compound metabolism; protoporphyrin-IX biosynthesis; coproporphyrinogen-III from 5-aminolevulinate: step 2/4. Functionally, tetrapolymerization of the monopyrrole PBG into the hydroxymethylbilane pre-uroporphyrinogen in several discrete steps. The sequence is that of Porphobilinogen deaminase from Baumannia cicadellinicola subsp. Homalodisca coagulata.